The chain runs to 523 residues: Cysteine-rich secretory protein LCCL domain-containing 1 (523 aa).

The first 23 residues, 1-23 (MKYVVQEWLRITTLLFIAQAVSA), serve as a signal peptide directing secretion. An SCP domain is found at 66 to 206 (LDLHNKLRGQ…PKAVYLVCNY (141 aa)). The disordered stretch occupies residues 246 to 298 (ERPYSPHEPEEETNEIERQRSKAQDATAQSRPRTHSPSGSTGSEDSEKNEVIS). Polar residues predominate over residues 269–288 (QDATAQSRPRTHSPSGSTGS). 2 consecutive LCCL domains span residues 302–397 (MSQI…ANSF) and 403–505 (TVQA…PGKQ). Disulfide bonds link C308–C326, C330–C350, C409–C431, and C435–C458.

The protein belongs to the CRISP family.

It localises to the secreted. The sequence is that of Cysteine-rich secretory protein LCCL domain-containing 1 (CRISPLD1) from Gallus gallus (Chicken).